Consider the following 178-residue polypeptide: MSRIGKQPVAIPSGVDVKIENGKIIAKKGNLTQEVEFGNRVNVSIEDNKIVFSPVGEDKQSKAFWGTYRALTNNAIEGLTKGFEKKLEINGVGYRAAVKGKELELQLGFSHPILYPIPEGIQISVEKNIITIKGHDKQKVGQVAAEIRSFRPPEPYKGKGVKYVDEVIIRKAGKTAKK.

Belongs to the universal ribosomal protein uL6 family. In terms of assembly, part of the 50S ribosomal subunit.

In terms of biological role, this protein binds to the 23S rRNA, and is important in its secondary structure. It is located near the subunit interface in the base of the L7/L12 stalk, and near the tRNA binding site of the peptidyltransferase center. This is Large ribosomal subunit protein uL6 from Nitratiruptor sp. (strain SB155-2).